Reading from the N-terminus, the 163-residue chain is NADH-quinone oxidoreductase subunit B (163 aa).

Positions 32, 33, 98, and 127 each coordinate [4Fe-4S] cluster.

Belongs to the complex I 20 kDa subunit family. As to quaternary structure, NDH-1 is composed of 14 different subunits. Subunits NuoB, C, D, E, F, and G constitute the peripheral sector of the complex. [4Fe-4S] cluster serves as cofactor.

Its subcellular location is the cell inner membrane. The catalysed reaction is a quinone + NADH + 5 H(+)(in) = a quinol + NAD(+) + 4 H(+)(out). In terms of biological role, NDH-1 shuttles electrons from NADH, via FMN and iron-sulfur (Fe-S) centers, to quinones in the respiratory chain. Couples the redox reaction to proton translocation (for every two electrons transferred, four hydrogen ions are translocated across the cytoplasmic membrane), and thus conserves the redox energy in a proton gradient. This chain is NADH-quinone oxidoreductase subunit B, found in Pelobacter propionicus (strain DSM 2379 / NBRC 103807 / OttBd1).